The primary structure comprises 112 residues: Large ribosomal subunit protein uL22 (112 aa).

It belongs to the universal ribosomal protein uL22 family. Part of the 50S ribosomal subunit.

In terms of biological role, this protein binds specifically to 23S rRNA; its binding is stimulated by other ribosomal proteins, e.g. L4, L17, and L20. It is important during the early stages of 50S assembly. It makes multiple contacts with different domains of the 23S rRNA in the assembled 50S subunit and ribosome. The globular domain of the protein is located near the polypeptide exit tunnel on the outside of the subunit, while an extended beta-hairpin is found that lines the wall of the exit tunnel in the center of the 70S ribosome. The chain is Large ribosomal subunit protein uL22 from Legionella pneumophila subsp. pneumophila (strain Philadelphia 1 / ATCC 33152 / DSM 7513).